We begin with the raw amino-acid sequence, 507 residues long: Glycerol kinase (507 aa).

ADP is bound at residue Thr-12. The ATP site is built by Thr-12, Thr-13, and Ser-14. Residue Thr-12 participates in sn-glycerol 3-phosphate binding. ADP is bound at residue Arg-16. 4 residues coordinate sn-glycerol 3-phosphate: Arg-82, Glu-83, Tyr-134, and Asp-250. Glycerol contacts are provided by Arg-82, Glu-83, Tyr-134, Asp-250, and Gln-251. Thr-272 and Gly-316 together coordinate ADP. ATP is bound by residues Thr-272, Gly-316, Gln-320, and Gly-417. ADP is bound by residues Gly-417 and Asn-421.

The protein belongs to the FGGY kinase family.

The enzyme catalyses glycerol + ATP = sn-glycerol 3-phosphate + ADP + H(+). Its pathway is polyol metabolism; glycerol degradation via glycerol kinase pathway; sn-glycerol 3-phosphate from glycerol: step 1/1. Its activity is regulated as follows. Inhibited by fructose 1,6-bisphosphate (FBP). Functionally, key enzyme in the regulation of glycerol uptake and metabolism. Catalyzes the phosphorylation of glycerol to yield sn-glycerol 3-phosphate. This is Glycerol kinase from Beijerinckia indica subsp. indica (strain ATCC 9039 / DSM 1715 / NCIMB 8712).